Reading from the N-terminus, the 224-residue chain is Ras-related protein Rab-32C (224 aa).

A disordered region spans residues 1–22 (MYSNKNDKDKDKDQNNENNKNN). A GTP-binding site is contributed by 35–42 (GKLACGKT). An Effector region motif is present at residues 57–65 (YKPTIGVDF). GTP contacts are provided by residues 83–87 (DIAGQ) and 142–145 (NKCD). The disordered stretch occupies residues 203 to 224 (GFKLSDQSQSTETTPTQSKTCC). Over residues 209-224 (QSQSTETTPTQSKTCC) the composition is skewed to low complexity. Residues C223 and C224 are each lipidated (S-geranylgeranyl cysteine).

Belongs to the small GTPase superfamily. Rab family.

This chain is Ras-related protein Rab-32C (rab32C), found in Dictyostelium discoideum (Social amoeba).